The sequence spans 725 residues: ATP-dependent DNA helicase II subunit 2 (725 aa).

The 247-residue stretch at 232–478 folds into the Ku domain; that stretch reads LTLGDPQKYP…QQAMSDYVDA (247 aa).

Belongs to the ku80 family. In terms of assembly, heterodimer of mus-51/ku70 and mus-52/ku80.

Its subcellular location is the nucleus. It is found in the chromosome. The protein resides in the telomere. It catalyses the reaction ATP + H2O = ADP + phosphate + H(+). In terms of biological role, single-stranded DNA-dependent ATP-dependent helicase. Involved in non-homologous end joining (NHEJ) DNA double strand break repair. DNA-binding is sequence-independent but has a high affinity to nicks in double-stranded DNA and to the ends of duplex DNA. Binds to naturally occurring chromosomal ends, and therefore provides chromosomal end protection. Required also for telomere recombination to repair telomeric ends in the absence of telomerase. ku70, of the ku70/ku80 heterodimer, binds to the stem loop of tlc1, the RNA component of telomerase. Involved in telomere maintenance. Interacts with telomeric repeats and subtelomeric sequences thereby controlling telomere length and protecting against subtelomeric rearrangement. Maintains telomeric chromatin, which is involved in silencing the expression of genes located at the telomere. Required for mating-type switching. The chain is ATP-dependent DNA helicase II subunit 2 (mus-52) from Neurospora crassa (strain ATCC 24698 / 74-OR23-1A / CBS 708.71 / DSM 1257 / FGSC 987).